We begin with the raw amino-acid sequence, 898 residues long: Serine/threonine-protein kinase TAO3 (898 aa).

One can recognise a Protein kinase domain in the interval 24-277 (FIGLHEIGHG…SAELLRHDFV (254 aa)). Residues 30-38 (IGHGSFGAV) and lysine 53 contribute to the ATP site. Catalysis depends on aspartate 147, which acts as the Proton acceptor. 2 disordered regions span residues 316–362 (TRNG…SQSS) and 405–425 (DEAG…VQSQ). Serine 324 carries the post-translational modification Phosphoserine; by ATM. Residues serine 331, serine 343, serine 346, and serine 349 each carry the phosphoserine modification. The span at 334-351 (GTSLNREMDSLGSNHSIP) shows a compositional bias: polar residues. The segment covering 352-362 (SMSVSTGSQSS) has biased composition (low complexity). Phosphothreonine is present on threonine 357. The residue at position 359 (serine 359) is a Phosphoserine. Residues 405 to 416 (DEAGHGDPRPEP) are compositionally biased toward basic and acidic residues. The residue at position 442 (serine 442) is a Phosphoserine. Coiled-coil stretches lie at residues 452-502 (EQEN…THAN), 548-649 (FLES…HAML), and 754-879 (LKTL…DMES). Positions 565–596 (EEMNEDHSTPKKEKQERISKHKENLQHTQAEE) are disordered. Lysine 830 bears the N6-acetyllysine mark.

The protein belongs to the protein kinase superfamily. STE Ser/Thr protein kinase family. STE20 subfamily. Self-associates. Interacts with ERN1 and TRAF2. Interaction with TRAF2 is facilitated under ER stress conditions, such as treatment with tunicamycin, and may promote TRAF2 phosphorylation. Interacts (via N-terminus) with STK25; the interaction promotes STK25 abundance at the level of protein expression and/or stability. As to quaternary structure, (Microbial infection) Interacts with herpes simplex virus 1 UL37 protein. In terms of processing, autophosphorylated. Phosphorylation at Ser-324 by ATM following DNA damage is required for activation of the p38/MAPK14 stress-activated MAPK cascade. Phosphorylated at Ser-324 and on Tyr residues during T cell activation. Phosphorylated by LRRK2. As to expression, ubiquitously expressed at a low level, and highly expressed in peripheral blood leukocytes (PBLs), thymus, spleen, kidney, skeletal muscle, heart and liver.

Its subcellular location is the cytoplasm. The protein localises to the cell membrane. The protein resides in the membrane raft. It localises to the lipid droplet. The enzyme catalyses L-seryl-[protein] + ATP = O-phospho-L-seryl-[protein] + ADP + H(+). It catalyses the reaction L-threonyl-[protein] + ATP = O-phospho-L-threonyl-[protein] + ADP + H(+). Serine/threonine-protein kinase that acts as a regulator of the p38/MAPK14 stress-activated MAPK cascade and of the MAPK8/JNK cascade. In response to DNA damage, involved in the G2/M transition DNA damage checkpoint by activating the p38/MAPK14 stress-activated MAPK cascade, probably by mediating phosphorylation of upstream MAP2K3 and MAP2K6 kinases. Inhibits basal activity of the MAPK8/JNK cascade and diminishes its activation in response to epidermal growth factor (EGF). Positively regulates canonical T cell receptor (TCR) signaling by preventing early PTPN6/SHP1-mediated inactivation of LCK, ensuring sustained TCR signaling that is required for optimal activation and differentiation of T cells. Phosphorylates PTPN6/SHP1 on 'Thr-394', leading to its polyubiquitination and subsequent proteasomal degradation. Required for cell surface expression of metalloprotease ADAM10 on type 1 transitional B cells which is necessary for their NOTCH-mediated development into marginal zone B cells. Also required for the NOTCH-mediated terminal differentiation of splenic conventional type 2 dendritic cells. Positively regulates osteoblast differentiation by acting as an upstream activator of the JNK pathway. Promotes JNK signaling in hepatocytes and positively regulates hepatocyte lipid storage by inhibiting beta-oxidation and triacylglycerol secretion while enhancing lipid synthesis. Restricts age-associated inflammation by negatively regulating differentiation of macrophages and their production of pro-inflammatory cytokines. Plays a role in negatively regulating the abundance of regulatory T cells in white adipose tissue. This Homo sapiens (Human) protein is Serine/threonine-protein kinase TAO3 (TAOK3).